We begin with the raw amino-acid sequence, 196 residues long: Probable GTP-binding protein EngB (196 aa).

Positions 22–193 (SLPEVAFVGR…LEEIRKAKGE (172 aa)) constitute an EngB-type G domain. Residues 30–37 (GRSNVGKS), 57–61 (GRTQL), 75–78 (DLPG), 142–145 (TKSD), and 172–174 (FSA) contribute to the GTP site. Residues serine 37 and threonine 59 each coordinate Mg(2+).

The protein belongs to the TRAFAC class TrmE-Era-EngA-EngB-Septin-like GTPase superfamily. EngB GTPase family. Mg(2+) is required as a cofactor.

In terms of biological role, necessary for normal cell division and for the maintenance of normal septation. The chain is Probable GTP-binding protein EngB from Syntrophus aciditrophicus (strain SB).